A 488-amino-acid chain; its full sequence is Palmitoyltransferase ZDHHC14 (488 aa).

Residues 1–60 (MPPGGGGPMKDCEYSQISTHSSSPMESPHKKKKIAARRKWEVFPGRNKFFCNGRIMMARQ) lie on the Cytoplasmic side of the membrane. The helical transmembrane segment at 61-81 (TGVFYLTLVLILVTSGLFFAF) threads the bilayer. Topologically, residues 82–89 (DCPYLAVK) are lumenal. A helical membrane pass occupies residues 90-110 (ITPAIPAVAGILFFFVMGTLL). At 111–208 (RTSFSDPGVL…GNCVGKRNYR (98 aa)) the chain is on the cytoplasmic side. In terms of domain architecture, DHHC spans 165-215 (KYCFTCKIFRPPRASHCSLCDNCVERFDHHCPWVGNCVGKRNYRFFYMFIL). C195 (S-palmitoyl cysteine intermediate) is an active-site residue. The chain crosses the membrane as a helical span at residues 209-229 (FFYMFILSLSFLTVFIFAFVI). Residues 230–255 (THVILRSQQTGFLNALKDSPASVLEA) lie on the Lumenal side of the membrane. A helical transmembrane segment spans residues 256–276 (VVCFFSVWSIVGLSGFHTYLI). Residues 277–488 (SSNQTTNEDI…VRGLVKLSSV (212 aa)) lie on the Cytoplasmic side of the membrane. S455 is subject to Phosphoserine.

The protein belongs to the DHHC palmitoyltransferase family. ERF2/ZDHHC9 subfamily. As to expression, widely expressed.

The protein localises to the endoplasmic reticulum membrane. It localises to the golgi apparatus. The protein resides in the golgi stack membrane. It carries out the reaction L-cysteinyl-[protein] + hexadecanoyl-CoA = S-hexadecanoyl-L-cysteinyl-[protein] + CoA. Its function is as follows. Palmitoyltransferase that could catalyze the addition of palmitate onto various protein substrates. May have a palmitoyltransferase activity toward the beta-2 adrenergic receptor/ADRB2 and thereby regulate G protein-coupled receptor signaling. May play a role in cell differentiation and apoptosis. The protein is Palmitoyltransferase ZDHHC14 of Homo sapiens (Human).